A 175-amino-acid chain; its full sequence is Secretion monitor (175 aa).

The first 38 residues, 1–38 (MSIINFWRQFGRRYFWSHLLLGMVAAGIGMPSLVSAHA), serve as a signal peptide directing secretion.

The protein belongs to the SecM family.

Its subcellular location is the cytoplasm. It is found in the cytosol. The protein resides in the periplasm. Regulates secA expression by translational coupling of the secM secA operon. Translational pausing at a specific Pro residue 5 residues before the end of the protein may allow disruption of a mRNA repressor helix that normally suppresses secA translation initiation. This chain is Secretion monitor, found in Proteus mirabilis (strain HI4320).